Consider the following 191-residue polypeptide: Orotate phosphoribosyltransferase (191 aa).

Residue 114–122 (EDVITTGGS) coordinates 5-phospho-alpha-D-ribose 1-diphosphate. Residues Thr118 and Arg146 each contribute to the orotate site.

Belongs to the purine/pyrimidine phosphoribosyltransferase family. PyrE subfamily. Homodimer. It depends on Mg(2+) as a cofactor.

The catalysed reaction is orotidine 5'-phosphate + diphosphate = orotate + 5-phospho-alpha-D-ribose 1-diphosphate. It participates in pyrimidine metabolism; UMP biosynthesis via de novo pathway; UMP from orotate: step 1/2. Functionally, catalyzes the transfer of a ribosyl phosphate group from 5-phosphoribose 1-diphosphate to orotate, leading to the formation of orotidine monophosphate (OMP). The chain is Orotate phosphoribosyltransferase from Caldicellulosiruptor saccharolyticus (strain ATCC 43494 / DSM 8903 / Tp8T 6331).